The primary structure comprises 237 residues: Mannose-specific lectin alpha chain (237 aa).

Residues glutamate 8 and aspartate 10 each contribute to the Mn(2+) site. Ca(2+) is bound by residues aspartate 10, tyrosine 12, asparagine 14, and aspartate 19. Position 12 (tyrosine 12) interacts with a carbohydrate. 3 residues coordinate Mn(2+): aspartate 19, histidine 24, and serine 34. Residue 99 to 100 (LY) coordinates a carbohydrate. Residue aspartate 208 coordinates Ca(2+). Residue arginine 228 participates in a carbohydrate binding.

Belongs to the leguminous lectin family. As to quaternary structure, homotetramer. Post-translationally, the beta and gamma chains are produced by partial proteolytic processing of the lectin alpha chain by an asparaginyl endopeptidase.

Its function is as follows. D-mannose/D-glucose-binding lectin. Also binds derivatives of glucose and mannose such as more complex glycans. This Cymbosema roseum (Dioclea purpurea) protein is Mannose-specific lectin alpha chain.